Here is a 538-residue protein sequence, read N- to C-terminus: Phosphoenolpyruvate carboxykinase (ATP) (538 aa).

The substrate site is built by arginine 64, tyrosine 205, and lysine 211. Residues lysine 211, histidine 230, and 246 to 254 contribute to the ATP site; that span reads GLSGTGKTT. The Mn(2+) site is built by lysine 211 and histidine 230. Aspartate 267 is a Mn(2+) binding site. ATP-binding positions include glutamate 295, arginine 331, 447–448, and threonine 453; that span reads RI. Residue arginine 331 coordinates substrate.

The protein belongs to the phosphoenolpyruvate carboxykinase (ATP) family. As to quaternary structure, monomer. Mn(2+) is required as a cofactor.

The protein resides in the cytoplasm. The enzyme catalyses oxaloacetate + ATP = phosphoenolpyruvate + ADP + CO2. The protein operates within carbohydrate biosynthesis; gluconeogenesis. Its function is as follows. Involved in the gluconeogenesis. Catalyzes the conversion of oxaloacetate (OAA) to phosphoenolpyruvate (PEP) through direct phosphoryl transfer between the nucleoside triphosphate and OAA. The polypeptide is Phosphoenolpyruvate carboxykinase (ATP) (Haemophilus influenzae (strain ATCC 51907 / DSM 11121 / KW20 / Rd)).